Here is a 445-residue protein sequence, read N- to C-terminus: N-succinylarginine dihydrolase (445 aa).

Substrate is bound by residues 19–28, asparagine 110, and 137–138; these read AGLSYGNVAS and HR. Residue glutamate 174 is part of the active site. Position 214 (arginine 214) interacts with substrate. The active site involves histidine 250. Positions 252 and 363 each coordinate substrate. Cysteine 369 functions as the Nucleophile in the catalytic mechanism.

This sequence belongs to the succinylarginine dihydrolase family. As to quaternary structure, homodimer.

The enzyme catalyses N(2)-succinyl-L-arginine + 2 H2O + 2 H(+) = N(2)-succinyl-L-ornithine + 2 NH4(+) + CO2. The protein operates within amino-acid degradation; L-arginine degradation via AST pathway; L-glutamate and succinate from L-arginine: step 2/5. Functionally, catalyzes the hydrolysis of N(2)-succinylarginine into N(2)-succinylornithine, ammonia and CO(2). The sequence is that of N-succinylarginine dihydrolase from Aeromonas hydrophila subsp. hydrophila (strain ATCC 7966 / DSM 30187 / BCRC 13018 / CCUG 14551 / JCM 1027 / KCTC 2358 / NCIMB 9240 / NCTC 8049).